Reading from the N-terminus, the 321-residue chain is MQFLSSFVFAALALLPLSAMAVDEAASEIASSTKPASTNGTLSFCLGVKHADGTCKYTDDYLADFEVLAPYTNMIRTYATSDCNTLEYLLPALAQSPYNFSAILGVWPTDDAHYDLEKQALMQYLPQYGVDHVRAITVGSEVLYRNDLPADVLAERIYDVRGLVQQKLGFDVPVGTADSWNLWAGGSGDVVITASDFIMSNDFPYWQGQNTSNMTNTFISDTLAALERVQSVKGTNNVTFWVGETGWPTDGPSYGEADATVDIASEFFQEALCNIRRKGIDIFFFEAFDEDWKGDSSSVEPYFGAMYSNRTLKYNLNCTSE.

Residues 1 to 21 form the signal peptide; the sequence is MQFLSSFVFAALALLPLSAMA. Asn-39 and Asn-99 each carry an N-linked (GlcNAc...) asparagine glycan. The Proton donor role is filled by Glu-141. Asn-210, Asn-213, and Asn-237 each carry an N-linked (GlcNAc...) asparagine glycan. Glu-244 (nucleophile) is an active-site residue. 2 N-linked (GlcNAc...) asparagine glycosylation sites follow: Asn-309 and Asn-317.

The protein belongs to the glycosyl hydrolase 17 family.

The protein resides in the secreted. Its subcellular location is the cell wall. The catalysed reaction is Successive hydrolysis of beta-D-glucose units from the non-reducing ends of (1-&gt;3)-beta-D-glucans, releasing alpha-glucose.. Functionally, glucanases possibly play a role in cell expansion during growth, in cell-cell fusion during mating, and in spore release during sporulation. This enzyme may be involved in beta-glucan degradation and also function biosynthetically as a transglycosylase. This Schizosaccharomyces pombe (strain 972 / ATCC 24843) (Fission yeast) protein is Glucan 1,3-beta-glucosidase (bgl2).